Reading from the N-terminus, the 947-residue chain is Vacuolar membrane protease (947 aa).

The Cytoplasmic segment spans residues 1 to 15 (MRFKALLRAIFRFRK). The helical transmembrane segment at 16–36 (TNFSILLIITYAIIIALLVFD) threads the bilayer. Residues 37–358 (RSRYKLDLPN…GLFFVVVDTK (322 aa)) lie on the Vacuolar side of the membrane. N46, N92, N108, and N121 each carry an N-linked (GlcNAc...) asparagine glycan. 2 residues coordinate Zn(2+): H156 and D168. Catalysis depends on E200, which acts as the Proton acceptor. The Zn(2+) site is built by E201, E226, and H300. The N-linked (GlcNAc...) asparagine glycan is linked to N319. A helical transmembrane segment spans residues 359-379 (HLFYADIFMLIVGPILLMMKA). The Cytoplasmic portion of the chain corresponds to 380–391 (HLDKRRRLERSR). The helical transmembrane segment at 392–412 (LVQLRLLLSLGLSVVFLLLLT) threads the bilayer. Residues 413–428 (KSLNSFNPFVYSADYR) lie on the Vacuolar side of the membrane. The chain crosses the membrane as a helical span at residues 429–449 (TPLTGLFLLFVTVNYLIVTLA). Over 450–458 (ERLNPTESY) the chain is Cytoplasmic. Residues 459 to 479 (KTVAINQIFIIAWLMQLYITL) form a helical membrane-spanning segment. Residues 480-489 (RMAKSDFTLT) are Vacuolar-facing. A helical transmembrane segment spans residues 490–510 (GTYPLSIFSGCLIVALSLGLF). Over 511–601 (GTKNKAVNDA…DKNSDFSKHY (91 aa)) the chain is Cytoplasmic. 2 stretches are compositionally biased toward polar residues: residues 522–531 (NSSVRYASSQ) and 546–567 (NINQVRDTGNQEVTSNTNTDLH). The segment at 522-573 (NSSVRYASSQNDEDNPLPSQDRGENINQVRDTGNQEVTSNTNTDLHSNAEEV) is disordered. A helical transmembrane segment spans residues 602 to 622 (NWIVQFLCIVPISSFIFLFSL). The Vacuolar segment spans residues 623–641 (DYTLDAIHKMVQETTDDVQ). Residues 642 to 662 (LICIIITIGVILLALPILPFI) traverse the membrane as a helical segment. Over 663-669 (SKLNYQS) the chain is Cytoplasmic. A helical transmembrane segment spans residues 670 to 690 (SVIIAIIGVLLFGKSLVMQPF). Topologically, residues 691 to 947 (SEIAPLKVRF…LVVIKDKIQL (257 aa)) are vacuolar. N-linked (GlcNAc...) asparagine glycosylation is found at N742, N784, N801, and N833.

It belongs to the peptidase M28 family. Zn(2+) serves as cofactor.

The protein localises to the vacuole membrane. Functionally, may be involved in vacuolar sorting and osmoregulation. The sequence is that of Vacuolar membrane protease from Candida glabrata (strain ATCC 2001 / BCRC 20586 / JCM 3761 / NBRC 0622 / NRRL Y-65 / CBS 138) (Yeast).